The sequence spans 361 residues: Phosphoserine aminotransferase (361 aa).

An L-glutamate-binding site is contributed by R42. Pyridoxal 5'-phosphate-binding positions include 76-77 (AR), W102, T153, D173, and Q196. K197 carries the N6-(pyridoxal phosphate)lysine modification. 238–239 (NT) provides a ligand contact to pyridoxal 5'-phosphate.

Belongs to the class-V pyridoxal-phosphate-dependent aminotransferase family. SerC subfamily. As to quaternary structure, homodimer. The cofactor is pyridoxal 5'-phosphate.

Its subcellular location is the cytoplasm. The enzyme catalyses O-phospho-L-serine + 2-oxoglutarate = 3-phosphooxypyruvate + L-glutamate. It catalyses the reaction 4-(phosphooxy)-L-threonine + 2-oxoglutarate = (R)-3-hydroxy-2-oxo-4-phosphooxybutanoate + L-glutamate. It participates in amino-acid biosynthesis; L-serine biosynthesis; L-serine from 3-phospho-D-glycerate: step 2/3. It functions in the pathway cofactor biosynthesis; pyridoxine 5'-phosphate biosynthesis; pyridoxine 5'-phosphate from D-erythrose 4-phosphate: step 3/5. Its function is as follows. Catalyzes the reversible conversion of 3-phosphohydroxypyruvate to phosphoserine and of 3-hydroxy-2-oxo-4-phosphonooxybutanoate to phosphohydroxythreonine. This chain is Phosphoserine aminotransferase, found in Buchnera aphidicola subsp. Acyrthosiphon pisum (strain 5A).